The primary structure comprises 342 residues: MKQLESFEIPRTVIFGPGAISKTPQVVAKHKAERILIISGKSVTANYANEVAHLLSGYSVDVVRYDEVDTSYSKYDLVLGVGGGRPIDVAKVYSYLHRAPLIVIPTSASHDGIASPYVSYALSQKMASHGKIVASPIAIIADTTVILNAPSRLLKAGIGDLLGKIVAVRDWQLAHRLKGEEYSEYAAHLALTSYRIVVSNAFRIKNFTKEEDVRVLVKALIGCGVAMGIAGSSRPCSGSEHLFAHAVELLLGEKNNEAIHGELVALGTVVMAYLHGMNWRRIKRVAKEVGLPTTLKQIGIDADVAIEALTTAHTLRPDRYTILGSGLGKEAARRALETTELI.

NAD(+) is bound by residues 84-88 (GRPID) and 106-109 (TSAS). Residue Asp-111 participates in substrate binding. Residue Ser-115 coordinates NAD(+). Asp-160 contacts substrate. Zn(2+) is bound by residues Asp-160 and His-241. Residue His-245 participates in substrate binding. His-260 is a Zn(2+) binding site.

This sequence belongs to the glycerol-1-phosphate dehydrogenase family. Homodimer. The cofactor is Zn(2+).

It is found in the cytoplasm. It catalyses the reaction sn-glycerol 1-phosphate + NAD(+) = dihydroxyacetone phosphate + NADH + H(+). It carries out the reaction sn-glycerol 1-phosphate + NADP(+) = dihydroxyacetone phosphate + NADPH + H(+). It functions in the pathway membrane lipid metabolism; glycerophospholipid metabolism. Its function is as follows. Catalyzes the NAD(P)H-dependent reduction of dihydroxyacetonephosphate (DHAP or glycerone phosphate) to glycerol 1-phosphate (G1P). The G1P thus generated is used as the glycerophosphate backbone of phospholipids in the cellular membranes of Archaea. This Pyrobaculum arsenaticum (strain DSM 13514 / JCM 11321 / PZ6) protein is Glycerol-1-phosphate dehydrogenase [NAD(P)+].